Consider the following 624-residue polypeptide: tRNA uridine 5-carboxymethylaminomethyl modification enzyme MnmG (624 aa).

FAD is bound by residues glycine 13 to glycine 18, valine 125, and serine 180. Glycine 273–phenylalanine 287 is a binding site for NAD(+). Residue glutamine 370 coordinates FAD.

This sequence belongs to the MnmG family. Homodimer. Heterotetramer of two MnmE and two MnmG subunits. FAD serves as cofactor.

It is found in the cytoplasm. NAD-binding protein involved in the addition of a carboxymethylaminomethyl (cmnm) group at the wobble position (U34) of certain tRNAs, forming tRNA-cmnm(5)s(2)U34. The protein is tRNA uridine 5-carboxymethylaminomethyl modification enzyme MnmG of Legionella pneumophila (strain Corby).